Reading from the N-terminus, the 394-residue chain is MSYPAFDSKTFLEAHIEKTMAFYFPTCIDPEGGFFQFFKDDGSVYDPNTRHLVSSTRFIFNFAQAYLHTNIAEYKHAAVHGIQYLRQRHQSQSGGYVWLLDGGTNLDETNHCYGLAFVILAYSNALQIGLSEAEVWIEVTYDLLETHFWENKHGLYLDEISSDWKTVSPYRGQNANMHMCEALMSAFDATQNPKYLDRAKLLAKNICQKQASLSNSNEVWEHYTNDWQIDWDYNKNDPKHLFRPWGFQPGHQTEWAKLLLMLDKRSPENWYLPKAKYLFDLAYKKAWDTKKGGLHYGYAPDGTVCDPDKYFWVQAESFAAAWLLYKATKDETYYKQYLTLWEFSWNHMIDHTFGAWYRILDENNAQYDNNKSPAGKTDYHTMGACYEVLKTLTL.

Active-site proton donor/acceptor residues include H251 and H380.

It belongs to the N-acylglucosamine 2-epimerase family. As to quaternary structure, monomer.

The catalysed reaction is D-mannose = D-fructose. The enzyme catalyses D-lyxose = D-xylulose. Functionally, catalyzes the reversible isomerization of D-mannose to D-fructose. Can also isomerize D-lyxose, with lower efficiency. In longer reaction with a higher concentration of enzyme, it can isomerize 4-OH D-mannose derivatives (D-talose and 4-O-monosaccharyl-D-mannose). Cannot use D-glucose. This is D-mannose isomerase from Marinomonas mediterranea (strain ATCC 700492 / JCM 21426 / NBRC 103028 / MMB-1).